The sequence spans 203 residues: Secreted phosphoprotein 24 (203 aa).

A signal peptide spans 1–23 (MEQAMLKTLALLVLGMHYWCATG). Cystine bridges form between C86–C96 and C109–C127. S90 is modified (phosphoserine). Residues S137, S138, S162, S165, and S174 each carry the phosphoserine modification.

The protein belongs to the SPP2 family. In terms of processing, phosphorylation sites are present in the extracellular medium.

The protein localises to the secreted. Could coordinate an aspect of bone turnover. The sequence is that of Secreted phosphoprotein 24 (Spp2) from Mus musculus (Mouse).